The following is a 365-amino-acid chain: Peptide chain release factor 1 (365 aa).

N5-methylglutamine is present on glutamine 236.

This sequence belongs to the prokaryotic/mitochondrial release factor family. Post-translationally, methylated by PrmC. Methylation increases the termination efficiency of RF1.

The protein localises to the cytoplasm. In terms of biological role, peptide chain release factor 1 directs the termination of translation in response to the peptide chain termination codons UAG and UAA. This is Peptide chain release factor 1 from Latilactobacillus sakei subsp. sakei (strain 23K) (Lactobacillus sakei subsp. sakei).